The following is a 79-amino-acid chain: Acyl carrier protein (79 aa).

Positions 2–77 constitute a Carrier domain; sequence SDIGERVKKI…DATKFLEKNA (76 aa). An O-(pantetheine 4'-phosphoryl)serine modification is found at serine 37.

Belongs to the acyl carrier protein (ACP) family. In terms of processing, 4'-phosphopantetheine is transferred from CoA to a specific serine of apo-ACP by AcpS. This modification is essential for activity because fatty acids are bound in thioester linkage to the sulfhydryl of the prosthetic group.

The protein localises to the cytoplasm. It functions in the pathway lipid metabolism; fatty acid biosynthesis. Carrier of the growing fatty acid chain in fatty acid biosynthesis. The polypeptide is Acyl carrier protein (Bradyrhizobium diazoefficiens (strain JCM 10833 / BCRC 13528 / IAM 13628 / NBRC 14792 / USDA 110)).